The sequence spans 448 residues: N-succinylarginine dihydrolase (448 aa).

Substrate-binding positions include 19–28, asparagine 110, and 137–138; these read AGLSSGNIAS and HR. Glutamate 174 is a catalytic residue. A substrate-binding site is contributed by arginine 216. The active site involves histidine 252. Residues aspartate 254 and asparagine 366 each coordinate substrate. Cysteine 372 serves as the catalytic Nucleophile.

Belongs to the succinylarginine dihydrolase family. Homodimer.

The enzyme catalyses N(2)-succinyl-L-arginine + 2 H2O + 2 H(+) = N(2)-succinyl-L-ornithine + 2 NH4(+) + CO2. It participates in amino-acid degradation; L-arginine degradation via AST pathway; L-glutamate and succinate from L-arginine: step 2/5. Catalyzes the hydrolysis of N(2)-succinylarginine into N(2)-succinylornithine, ammonia and CO(2). The sequence is that of N-succinylarginine dihydrolase from Legionella pneumophila (strain Paris).